Reading from the N-terminus, the 443-residue chain is Ribulose bisphosphate carboxylase large chain (443 aa).

Lys3 bears the N6,N6,N6-trimethyllysine mark. Substrate is bound by residues Asn112 and Thr162. The active-site Proton acceptor is the Lys164. Lys166 is a substrate binding site. 3 residues coordinate Mg(2+): Lys190, Asp192, and Glu193. Residue Lys190 is modified to N6-carboxylysine. His283 functions as the Proton acceptor in the catalytic mechanism. Substrate-binding residues include Arg284, His316, and Ser368.

This sequence belongs to the RuBisCO large chain family. Type I subfamily. In terms of assembly, heterohexadecamer of 8 large chains and 8 small chains; disulfide-linked. The disulfide link is formed within the large subunit homodimers. Requires Mg(2+) as cofactor. Post-translationally, the disulfide bond which can form in the large chain dimeric partners within the hexadecamer appears to be associated with oxidative stress and protein turnover.

The protein localises to the plastid. It is found in the chloroplast. The catalysed reaction is 2 (2R)-3-phosphoglycerate + 2 H(+) = D-ribulose 1,5-bisphosphate + CO2 + H2O. The enzyme catalyses D-ribulose 1,5-bisphosphate + O2 = 2-phosphoglycolate + (2R)-3-phosphoglycerate + 2 H(+). RuBisCO catalyzes two reactions: the carboxylation of D-ribulose 1,5-bisphosphate, the primary event in carbon dioxide fixation, as well as the oxidative fragmentation of the pentose substrate in the photorespiration process. Both reactions occur simultaneously and in competition at the same active site. The sequence is that of Ribulose bisphosphate carboxylase large chain from Iris germanica (Bearded iris).